A 366-amino-acid polypeptide reads, in one-letter code: MIRTEEMLLNVGPQHPSTHGVFRLIIKIDGETIKEATPVIGYLHRGTEKIAESLQYTQIIPYTDRMDYLSAMTNNYVICHAVETMMGLEIPERAEYLRVLAMELGRVASHLVWWGTNLLDIGAVSPFLYAFREREMVINLLNELCGARLTFNYMRVGGVKWDAPDGWIQKVREFVPYMKEQLKGYHDLVSGNEIFVNRVKGIGIYSAEEAISYSLSGANLRCTGVKWDIRKDEPYSIYNQFDFDVPVGEVGDAWDRYMCRMAEIEESLKIIEQAAEQFPKEGSVMAKVPRIIKVPKGEAFVRIESPRGEIGCYIASEGKKEPYRLKFRRPSFYNLQILPKLLKGENIANLITILGGVDIVLGEVDG.

The protein belongs to the complex I 49 kDa subunit family. As to quaternary structure, NDH-1 is composed of 14 different subunits. Subunits NuoB, C, D, E, F, and G constitute the peripheral sector of the complex.

The protein localises to the cell membrane. The enzyme catalyses a quinone + NADH + 5 H(+)(in) = a quinol + NAD(+) + 4 H(+)(out). Functionally, NDH-1 shuttles electrons from NADH, via FMN and iron-sulfur (Fe-S) centers, to quinones in the respiratory chain. The immediate electron acceptor for the enzyme in this species is believed to be a menaquinone. Couples the redox reaction to proton translocation (for every two electrons transferred, four hydrogen ions are translocated across the cytoplasmic membrane), and thus conserves the redox energy in a proton gradient. The polypeptide is NADH-quinone oxidoreductase subunit D (Bacillus cytotoxicus (strain DSM 22905 / CIP 110041 / 391-98 / NVH 391-98)).